The following is a 365-amino-acid chain: 2-aminoethylphosphonate--pyruvate transaminase (365 aa).

N6-(pyridoxal phosphate)lysine is present on K194.

The protein belongs to the class-V pyridoxal-phosphate-dependent aminotransferase family. PhnW subfamily. In terms of assembly, homodimer. Requires pyridoxal 5'-phosphate as cofactor.

It catalyses the reaction (2-aminoethyl)phosphonate + pyruvate = phosphonoacetaldehyde + L-alanine. Involved in phosphonate degradation. The polypeptide is 2-aminoethylphosphonate--pyruvate transaminase (Bacillus cereus (strain G9842)).